A 100-amino-acid chain; its full sequence is Small ribosomal subunit protein uS14c (100 aa).

The protein belongs to the universal ribosomal protein uS14 family. Part of the 30S ribosomal subunit.

It localises to the plastid. The protein localises to the chloroplast. Its function is as follows. Binds 16S rRNA, required for the assembly of 30S particles. This Huperzia lucidula (Shining clubmoss) protein is Small ribosomal subunit protein uS14c.